A 123-amino-acid polypeptide reads, in one-letter code: MQNKIQVKSVEKRENALIFCAENNEIEVKELSARNHVLVDSDNLSFLYILENESSFIYVSIPHTCWEAMHEAMNNDIVMFVRVNDVEMELENLKEEVEYLVENIEGNANYGEELVTAVEKVFL.

The protein belongs to the UPF0738 family.

This is UPF0738 protein BCG9842_B4089 from Bacillus cereus (strain G9842).